A 152-amino-acid polypeptide reads, in one-letter code: Transcriptional regulator MraZ (152 aa).

SpoVT-AbrB domains lie at 5 to 52 and 81 to 124; these read ATLV…PLPE and ASEC…DEQT.

This sequence belongs to the MraZ family. As to quaternary structure, forms oligomers.

It is found in the cytoplasm. The protein localises to the nucleoid. Its function is as follows. Negatively regulates its own expression and that of the subsequent genes in the proximal part of the division and cell wall (dcw) gene cluster. Acts by binding directly to DNA. May also regulate the expression of genes outside the dcw cluster. The sequence is that of Transcriptional regulator MraZ from Pectobacterium carotovorum subsp. carotovorum (strain PC1).